The primary structure comprises 207 residues: Large ribosomal subunit protein uL4 (207 aa).

Positions 45–78 (RQGTHAVKNRSARRGGGRKPWRQKGTGRARQGSI) are disordered. The span at 51 to 71 (VKNRSARRGGGRKPWRQKGTG) shows a compositional bias: basic residues.

Belongs to the universal ribosomal protein uL4 family. Part of the 50S ribosomal subunit.

Functionally, one of the primary rRNA binding proteins, this protein initially binds near the 5'-end of the 23S rRNA. It is important during the early stages of 50S assembly. It makes multiple contacts with different domains of the 23S rRNA in the assembled 50S subunit and ribosome. Its function is as follows. Forms part of the polypeptide exit tunnel. This chain is Large ribosomal subunit protein uL4, found in Lactiplantibacillus plantarum (strain ATCC BAA-793 / NCIMB 8826 / WCFS1) (Lactobacillus plantarum).